The primary structure comprises 84 residues: MFTLKKPLLLIVLLGIISLSLCEQERNADEDEESETKRGIFTKINKKKAKTGVFNIIKTIGKEAGMDVIRAGIDTISCKIKGEC.

The first 22 residues, 1–22, serve as a signal peptide directing secretion; it reads MFTLKKPLLLIVLLGIISLSLC. Residues 23–36 constitute a propeptide that is removed on maturation; the sequence is EQERNADEDEESET. A disulfide bridge connects residues cysteine 78 and cysteine 84.

In terms of tissue distribution, expressed by the skin glands.

Its subcellular location is the secreted. Its function is as follows. Antimicrobial peptide. The chain is Esculentin-1Vb from Odorrana versabilis (Chinese bamboo leaf odorous frog).